A 51-amino-acid polypeptide reads, in one-letter code: Large ribosomal subunit protein bL33 (51 aa).

Belongs to the bacterial ribosomal protein bL33 family.

The protein is Large ribosomal subunit protein bL33 of Francisella tularensis subsp. tularensis (strain FSC 198).